A 287-amino-acid polypeptide reads, in one-letter code: Putative sugar uptake protein LJ_0170 (287 aa).

The next 10 helical transmembrane spans lie at 4-23 (VYLF…IASV), 28-50 (VYNQ…MAIM), 56-78 (WSLF…GQYI), 91-108 (ISTG…VLAF), 118-137 (LYGF…TSFT), 150-169 (VSTI…SSSI), 179-198 (SIFF…YTLV), 211-230 (VQSG…YILS), 240-259 (FVIS…IFLH), and 266-285 (GLIF…MLTT).

This sequence belongs to the GRP transporter (TC 2.A.7.5) family.

The protein resides in the cell membrane. The protein is Putative sugar uptake protein LJ_0170 of Lactobacillus johnsonii (strain CNCM I-12250 / La1 / NCC 533).